Reading from the N-terminus, the 432-residue chain is Pachytene checkpoint protein 2 homolog (432 aa).

M1 bears the N-acetylmethionine mark. Position 179-186 (179-186 (GPPGTGKT)) interacts with ATP.

This sequence belongs to the AAA ATPase family. PCH2 subfamily. Specifically interacts with the ligand binding domain of the thyroid receptor (TR). This interaction does not require the presence of thyroid hormone for its interaction. Interacts with HPV16 E1. Interacts with proteasome subunit PSMA8; to participate in meiosis progression during spermatogenesis.

Its function is as follows. Plays a key role in chromosome recombination and chromosome structure development during meiosis. Required at early steps in meiotic recombination that leads to non-crossovers pathways. Also needed for efficient completion of homologous synapsis by influencing crossover distribution along the chromosomes affecting both crossovers and non-crossovers pathways. Also required for development of higher-order chromosome structures and is needed for synaptonemal-complex formation. In males, required for efficient synapsis of the sex chromosomes and for sex body formation. Promotes early steps of the DNA double-strand breaks (DSBs) repair process upstream of the assembly of RAD51 complexes. Required for depletion of HORMAD1 and HORMAD2 from synapsed chromosomes. Plays a role in mitotic spindle assembly checkpoint (SAC) activation. The protein is Pachytene checkpoint protein 2 homolog (TRIP13) of Homo sapiens (Human).